The following is a 103-amino-acid chain: Large ribosomal subunit protein bL21 (103 aa).

It belongs to the bacterial ribosomal protein bL21 family. As to quaternary structure, part of the 50S ribosomal subunit. Contacts protein L20.

Its function is as follows. This protein binds to 23S rRNA in the presence of protein L20. This is Large ribosomal subunit protein bL21 from Caldicellulosiruptor saccharolyticus (strain ATCC 43494 / DSM 8903 / Tp8T 6331).